The chain runs to 99 residues: CLAVATA3/ESR (CLE)-related protein 11 (99 aa).

An N-terminal signal peptide occupies residues 1 to 31; it reads MTKQPKPCSFLFHISLLSALFVFLLISFAFT. Hydroxyproline occurs at positions 91 and 94. O-linked (Ara...) hydroxyproline glycosylation is present at P94.

This sequence belongs to the CLV3/ESR signal peptide family. In terms of processing, the O-glycosylation (arabinosylation) of the hydroxyproline Pro-94 enhances binding affinity of the CLE11p peptide for its receptor. In terms of tissue distribution, mostly expressed in seedlings, roots and siliques, and, to a lower extent, in leaves, flowers, stems and apex.

The protein resides in the secreted. Its subcellular location is the extracellular space. Extracellular signal peptide that regulates cell fate. Represses root apical meristem maintenance. Regulates the transition of protophloem cells from proliferation to differentiation, thus impinging on postembryonic growth capacity of the root meristem; this signaling pathway requires CRN and CLV2. This chain is CLAVATA3/ESR (CLE)-related protein 11, found in Arabidopsis thaliana (Mouse-ear cress).